The sequence spans 329 residues: Bifunctional muramidase/DL-endopeptidase CwlT (329 aa).

An N-terminal signal peptide occupies residues 1-29 (MISKKVVLPLVFSAPFIFFFVLCIVVVMT). Positions 59–192 (RFRAVFEKYA…SYVDHVMRYV (134 aa)) are muramidase. The 124-residue stretch at 206 to 329 (MDFYETVMKE…DHLVSFGRIK (124 aa)) folds into the NlpC/P60 domain. Catalysis depends on Cys237, which acts as the Nucleophile. The Proton acceptor role is filled by His290. Asn302 is an active-site residue.

It belongs to the peptidase C40 family.

It is found in the secreted. The catalysed reaction is Hydrolysis of (1-&gt;4)-beta-linkages between N-acetylmuramic acid and N-acetyl-D-glucosamine residues in a peptidoglycan and between N-acetyl-D-glucosamine residues in chitodextrins.. Its function is as follows. Exhibits both muramidase and DL-endopeptidase activities. The N-terminal region acts as a N-acetylmuramidase, which cleaves the bond between N-acetylmuramic acid and N-acetyl-D-glucosamine (MurNAc-GlcNAc) in peptidoglycan. The C-terminal region acts as a DL-endopeptidase that cleaves the bond between D-gamma-glutamate and meso-diaminopimelic acid. Cannot degrade purified B.anthracis peptidoglycan, which differ from those of B.subtilis. CwlT is required for ICEBs1 conjugation: the muramidase activity is essential, whereas the peptidase activity is partially dispensable for transfer of ICEBs1. This Bacillus subtilis (strain 168) protein is Bifunctional muramidase/DL-endopeptidase CwlT.